A 472-amino-acid polypeptide reads, in one-letter code: Carbohydrate sulfotransferase 3 (472 aa).

Over 1–19 (MEKGLALPQDFRDLVHSLK) the chain is Cytoplasmic. Residues 20 to 38 (IRGRYVLFLAFVVIVFIFI) traverse the membrane as a helical; Signal-anchor for type II membrane protein segment. Residues 39 to 472 (EKENKIISRV…LEERGTFWVT (434 aa)) are Lumenal-facing. 3 N-linked (GlcNAc...) asparagine glycosylation sites follow: N63, N74, and N96. 135 to 141 (TRTGSSF) serves as a coordination point for 3'-phosphoadenylyl sulfate. The N-linked (GlcNAc...) asparagine glycan is linked to N250. 295 to 303 (RDPRAVLAS) serves as a coordination point for 3'-phosphoadenylyl sulfate. Residues N413 and N457 are each glycosylated (N-linked (GlcNAc...) asparagine).

The protein belongs to the sulfotransferase 1 family. Gal/GlcNAc/GalNAc subfamily. N-glycosylated. In terms of tissue distribution, widely expressed. Highly expressed in spleen, lung, eye and stomach. Constitutively expressed at low level during the mid- to late-gestation period. Expressed in the brain in a temporally controlled manner: peaks at 2 weeks after birth in the cerebellum, but at 3 weeks in the cerebrum. Localizes to stromal cells in the bone marrow, and stromal cells in the marginal zone and red pulp of the spleen, but the sense probe did not.

It is found in the golgi apparatus membrane. It catalyses the reaction chondroitin beta-D-glucuronate + n 3'-phosphoadenylyl sulfate = chondroitin 6'-sulfate + n adenosine 3',5'-bisphosphate + n H(+). The catalysed reaction is 3'-phosphoadenylyl sulfate + keratan = adenosine 3',5'-bisphosphate + keratan 6'-sulfate.. Sulfotransferase that utilizes 3'-phospho-5'-adenylyl sulfate (PAPS) as sulfonate donor to catalyze the transfer of sulfate to position 6 of the N-acetylgalactosamine (GalNAc) residue of chondroitin. Chondroitin sulfate constitutes the predominant proteoglycan present in cartilage and is distributed on the surfaces of many cells and extracellular matrices. Catalyzes with a lower efficiency the sulfation of Gal residues of keratan sulfate, another glycosaminoglycan. Can also catalyze the sulfation of the Gal residues in sialyl N-acetyllactosamine (sialyl LacNAc) oligosaccharides. May play a role in the maintenance of naive T-lymphocytes in the spleen. The sequence is that of Carbohydrate sulfotransferase 3 (Chst3) from Mus musculus (Mouse).